Reading from the N-terminus, the 205-residue chain is Metalloproteinase inhibitor 1 (205 aa).

Residues 1-24 form the signal peptide; the sequence is MMAPFASLASGILLLLSLIASSKA. Residue Cys-25 coordinates Zn(2+). The tract at residues 25 to 28 is involved in metalloproteinase-binding; sequence CSCA. Disulfide bonds link Cys-25-Cys-94, Cys-27-Cys-123, Cys-37-Cys-148, Cys-151-Cys-197, Cys-156-Cys-161, and Cys-169-Cys-189. An NTR domain is found at 25–148; it reads CSCAPPHPQT…AFSKTYSAGC (124 aa). The N-linked (GlcNAc...) asparagine glycan is linked to Asn-54. The segment at 91–92 is involved in metalloproteinase-binding; the sequence is ES. Asn-102 is a glycosylation site (N-linked (GlcNAc...) asparagine). Ser-179 is modified (phosphoserine).

Belongs to the protease inhibitor I35 (TIMP) family. Interacts with MMP1, MMP3, MMP10 and MMP13, but has only very low affinity for MMP14. Interacts with CD63; identified in a complex with CD63 and ITGB1. Post-translationally, the activity of TIMP1 is dependent on the presence of disulfide bonds. N-glycosylated. In terms of tissue distribution, found in fetal and adult tissues. Highest levels are found in bone. Also found in lung, ovary and uterus.

It localises to the secreted. Metalloproteinase inhibitor that functions by forming one to one complexes with target metalloproteinases, such as collagenases, and irreversibly inactivates them by binding to their catalytic zinc cofactor. Acts on MMP1, MMP2, MMP3, MMP7, MMP8, MMP9, MMP10, MMP11, MMP12, MMP13 and MMP16. Does not act on MMP14. Also functions as a growth factor that regulates cell differentiation, migration and cell death and activates cellular signaling cascades via CD63 and ITGB1. Plays a role in integrin signaling. The sequence is that of Metalloproteinase inhibitor 1 (Timp1) from Mus musculus (Mouse).